Consider the following 189-residue polypeptide: Peptidyl-tRNA hydrolase (189 aa).

Y15 is a binding site for tRNA. The Proton acceptor role is filled by H20. Residues F66, N68, and N114 each contribute to the tRNA site.

The protein belongs to the PTH family. In terms of assembly, monomer.

It is found in the cytoplasm. It carries out the reaction an N-acyl-L-alpha-aminoacyl-tRNA + H2O = an N-acyl-L-amino acid + a tRNA + H(+). Functionally, hydrolyzes ribosome-free peptidyl-tRNAs (with 1 or more amino acids incorporated), which drop off the ribosome during protein synthesis, or as a result of ribosome stalling. Its function is as follows. Catalyzes the release of premature peptidyl moieties from peptidyl-tRNA molecules trapped in stalled 50S ribosomal subunits, and thus maintains levels of free tRNAs and 50S ribosomes. This is Peptidyl-tRNA hydrolase from Streptococcus pneumoniae (strain P1031).